The sequence spans 487 residues: 3-octaprenyl-4-hydroxybenzoate carboxy-lyase (487 aa).

Residue Asn-172 coordinates Mn(2+). Prenylated FMN is bound by residues 175–177 (IYR), 189–191 (RWL), and 194–195 (RG). A Mn(2+)-binding site is contributed by Glu-238. Catalysis depends on Asp-287, which acts as the Proton donor.

It belongs to the UbiD family. As to quaternary structure, homohexamer. It depends on prenylated FMN as a cofactor. The cofactor is Mn(2+).

It localises to the cell membrane. The catalysed reaction is a 4-hydroxy-3-(all-trans-polyprenyl)benzoate + H(+) = a 2-(all-trans-polyprenyl)phenol + CO2. It participates in cofactor biosynthesis; ubiquinone biosynthesis. Functionally, catalyzes the decarboxylation of 3-octaprenyl-4-hydroxy benzoate to 2-octaprenylphenol, an intermediate step in ubiquinone biosynthesis. The chain is 3-octaprenyl-4-hydroxybenzoate carboxy-lyase from Actinobacillus pleuropneumoniae serotype 3 (strain JL03).